The primary structure comprises 74 residues: Ubiquitin-like protein FUBI (74 aa).

Belongs to the ubiquitin family.

The polypeptide is Ubiquitin-like protein FUBI (Fau) (Rattus norvegicus (Rat)).